A 45-amino-acid chain; its full sequence is Osteocalcin 1 (45 aa).

The Gla domain maps to 1-41; the sequence is AAGQLSLTQLESLREVCELNLACEHMMDTEGIIAAYTAYYG. Ca(2+)-binding residues include E11, E15, E18, and E24. E11, E15, and E18 each carry 4-carboxyglutamate. Residues C17 and C23 are joined by a disulfide bond.

It belongs to the osteocalcin/matrix Gla protein family. In terms of processing, gamma-carboxyglutamate residues are formed by vitamin K dependent carboxylation by GGCX. These residues are essential for the binding of calcium.

The protein resides in the secreted. In terms of biological role, the carboxylated form is one of the main organic components of the bone matrix, which constitutes 1-2% of the total bone protein. The carboxylated form binds strongly to apatite and calcium. In Diplodus sargus (White seabream), this protein is Osteocalcin 1.